Reading from the N-terminus, the 362-residue chain is Phospho-N-acetylmuramoyl-pentapeptide-transferase (362 aa).

The next 10 helical transmembrane spans lie at 28 to 48, 75 to 95, 100 to 120, 134 to 154, 170 to 190, 201 to 221, 241 to 261, 265 to 285, 290 to 310, and 339 to 359; these read GAVLTALIVAFLVGPRIIAWL, TMGGFMILLALSVSTLLWADL, VWIVLLVTLGYGLIGFWDDYL, AKLVAEIAIALAAAAWVWSLQ, VLLQLSWFYLPFAVFIIVGAG, GLAIVPVMIASGVFAIFSYLV, LAVFCGALVGAGLGFLWFNAP, VFMGDTGSLALGGALGAISVV, LVLGIVGGLFVLETVSVIVQV, and TVVIRFWIIATILALAGLATL.

Belongs to the glycosyltransferase 4 family. MraY subfamily. The cofactor is Mg(2+).

The protein resides in the cell inner membrane. It carries out the reaction UDP-N-acetyl-alpha-D-muramoyl-L-alanyl-gamma-D-glutamyl-meso-2,6-diaminopimeloyl-D-alanyl-D-alanine + di-trans,octa-cis-undecaprenyl phosphate = di-trans,octa-cis-undecaprenyl diphospho-N-acetyl-alpha-D-muramoyl-L-alanyl-D-glutamyl-meso-2,6-diaminopimeloyl-D-alanyl-D-alanine + UMP. Its pathway is cell wall biogenesis; peptidoglycan biosynthesis. Its function is as follows. Catalyzes the initial step of the lipid cycle reactions in the biosynthesis of the cell wall peptidoglycan: transfers peptidoglycan precursor phospho-MurNAc-pentapeptide from UDP-MurNAc-pentapeptide onto the lipid carrier undecaprenyl phosphate, yielding undecaprenyl-pyrophosphoryl-MurNAc-pentapeptide, known as lipid I. In Paramagnetospirillum magneticum (strain ATCC 700264 / AMB-1) (Magnetospirillum magneticum), this protein is Phospho-N-acetylmuramoyl-pentapeptide-transferase.